We begin with the raw amino-acid sequence, 353 residues long: Putative actin-28 (353 aa).

This sequence belongs to the actin family.

Its subcellular location is the cytoplasm. The protein localises to the cytoskeleton. The enzyme catalyses ATP + H2O = ADP + phosphate + H(+). Functionally, actins are highly conserved proteins that are involved in various types of cell motility and are ubiquitously expressed in all eukaryotic cells. Multiple isoforms are involved in various cellular functions such as cytoskeleton structure, cell mobility, chromosome movement and muscle contraction. This Dictyostelium discoideum (Social amoeba) protein is Putative actin-28 (act28).